The chain runs to 391 residues: Alanine racemase (391 aa).

The active-site Proton acceptor; specific for D-alanine is the Lys-38. Position 38 is an N6-(pyridoxal phosphate)lysine (Lys-38). A substrate-binding site is contributed by Arg-136. The Proton acceptor; specific for L-alanine role is filled by Tyr-267. Met-315 is a substrate binding site.

This sequence belongs to the alanine racemase family. It depends on pyridoxal 5'-phosphate as a cofactor.

It catalyses the reaction L-alanine = D-alanine. The protein operates within amino-acid biosynthesis; D-alanine biosynthesis; D-alanine from L-alanine: step 1/1. Functionally, catalyzes the interconversion of L-alanine and D-alanine. May also act on other amino acids. The sequence is that of Alanine racemase (alr) from Clostridium kluyveri (strain ATCC 8527 / DSM 555 / NBRC 12016 / NCIMB 10680 / K1).